The primary structure comprises 146 residues: Large ribosomal subunit protein uL15 (146 aa).

The disordered stretch occupies residues 18–45 (VLGRGLGCGKGKTSGRGHKGQKARSGCA). Residues 30–39 (TSGRGHKGQK) are compositionally biased toward basic residues.

It belongs to the universal ribosomal protein uL15 family. As to quaternary structure, part of the 50S ribosomal subunit.

Binds to the 23S rRNA. This Anaplasma marginale (strain St. Maries) protein is Large ribosomal subunit protein uL15.